We begin with the raw amino-acid sequence, 277 residues long: Large ribosomal subunit protein uL2 (277 aa).

2 disordered regions span residues 38-58 (HRKG…GGGH) and 219-277 (TVRG…RKNK).

The protein belongs to the universal ribosomal protein uL2 family. In terms of assembly, part of the 50S ribosomal subunit. Forms a bridge to the 30S subunit in the 70S ribosome.

Its function is as follows. One of the primary rRNA binding proteins. Required for association of the 30S and 50S subunits to form the 70S ribosome, for tRNA binding and peptide bond formation. It has been suggested to have peptidyltransferase activity; this is somewhat controversial. Makes several contacts with the 16S rRNA in the 70S ribosome. The chain is Large ribosomal subunit protein uL2 from Bacillus pumilus (strain SAFR-032).